The primary structure comprises 152 residues: Ribosome maturation factor RimP (152 aa).

Belongs to the RimP family.

The protein resides in the cytoplasm. Functionally, required for maturation of 30S ribosomal subunits. The sequence is that of Ribosome maturation factor RimP from Porphyromonas gingivalis (strain ATCC BAA-308 / W83).